We begin with the raw amino-acid sequence, 338 residues long: Ketol-acid reductoisomerase (NADP(+)) (338 aa).

The KARI N-terminal Rossmann domain occupies 3–183 (IDVFYDDDAD…GGARAGVIPT (181 aa)). NADP(+) contacts are provided by residues 26–29 (YGSQ), Arg-49, Ser-52, Ser-54, and 84–87 (DTSQ). His-109 is an active-site residue. Residue Gly-135 coordinates NADP(+). Residues 184–329 (TFEAETVTDL…AKLRDLMSWV (146 aa)) enclose the KARI C-terminal knotted domain. Mg(2+)-binding residues include Asp-192, Glu-196, Glu-228, and Glu-232. Ser-253 provides a ligand contact to substrate.

It belongs to the ketol-acid reductoisomerase family. Requires Mg(2+) as cofactor.

It catalyses the reaction (2R)-2,3-dihydroxy-3-methylbutanoate + NADP(+) = (2S)-2-acetolactate + NADPH + H(+). The enzyme catalyses (2R,3R)-2,3-dihydroxy-3-methylpentanoate + NADP(+) = (S)-2-ethyl-2-hydroxy-3-oxobutanoate + NADPH + H(+). The protein operates within amino-acid biosynthesis; L-isoleucine biosynthesis; L-isoleucine from 2-oxobutanoate: step 2/4. It participates in amino-acid biosynthesis; L-valine biosynthesis; L-valine from pyruvate: step 2/4. Its function is as follows. Involved in the biosynthesis of branched-chain amino acids (BCAA). Catalyzes an alkyl-migration followed by a ketol-acid reduction of (S)-2-acetolactate (S2AL) to yield (R)-2,3-dihydroxy-isovalerate. In the isomerase reaction, S2AL is rearranged via a Mg-dependent methyl migration to produce 3-hydroxy-3-methyl-2-ketobutyrate (HMKB). In the reductase reaction, this 2-ketoacid undergoes a metal-dependent reduction by NADPH to yield (R)-2,3-dihydroxy-isovalerate. The sequence is that of Ketol-acid reductoisomerase (NADP(+)) from Corynebacterium jeikeium (strain K411).